The chain runs to 425 residues: Beta-1,4-galactosyltransferase galt-1 (425 aa).

Topologically, residues 1 to 8 (MPRITASK) are cytoplasmic. A helical; Signal-anchor for type II membrane protein membrane pass occupies residues 9–29 (IVLLIALSFCITVIYHFPIAT). Residues 30-425 (RSSKEYDEYG…FDSVVGLLDL (396 aa)) lie on the Lumenal side of the membrane. Asn-109 and Asn-152 each carry an N-linked (GlcNAc...) asparagine glycan. The 206-residue stretch at 189–394 (KMSICVPALF…LLRVYHYKDK (206 aa)) folds into the GT92 domain.

Belongs to the glycosyltransferase 92 family. Requires Mn(2+) as cofactor. N-glycosylated. As to expression, expressed in intestine and coelomocytes.

It is found in the golgi apparatus. Its subcellular location is the golgi stack membrane. Inhibited by EDTA, Cu(2+) and Zn(2+). Functionally, catalyzes the transfer of beta-galactose from UDP-galactose to position 4 of alpha-1,6-linked fucose at the reducing end GlcNAc in N-glycan cores. Involved in susceptibility to the nematotoxic C.cinerea galectin Cgl2, likely by contributing to the synthesis of core alpha-1,6-fucosylated N-glycans to which Cgl2 binds. The chain is Beta-1,4-galactosyltransferase galt-1 from Caenorhabditis elegans.